The following is a 190-amino-acid chain: Elongation factor P-like protein (190 aa).

This sequence belongs to the elongation factor P family.

This Photorhabdus laumondii subsp. laumondii (strain DSM 15139 / CIP 105565 / TT01) (Photorhabdus luminescens subsp. laumondii) protein is Elongation factor P-like protein.